Consider the following 50-residue polypeptide: Small integral membrane protein 46 (50 aa).

Residues 15-37 (TTFQLWLQLLLWAHLAVRFLGYL) traverse the membrane as a helical segment.

It localises to the membrane. The chain is Small integral membrane protein 46 from Homo sapiens (Human).